Consider the following 459-residue polypeptide: MKKLWGGRFTKTAEEWVDEFGASIPFDQELVEEDIEGSLAHVTMLGECGILPAEDVEKIKDGLLRLLEKAKRGELEFSVAYEDIHLNIEKMLIDDIGSVGGKLHTGRSRNDQVATDMHLYLRKRVKEILSLIRGLQRALVSQAEKHVETIMPGYTHLQRAQPISFAHHLLAYVWMLERDYERFSESLKRINRSPLGAGALAGTTFPINRQRTAELLGFEGIYENSLDAVSDRDFIIEFLSNSSMLMMHLSRLAEELILWSSQEFQFVELDDAFATGSSIMPQKKNPDMAELIRGKTGRVYGHLMALLTVMKGLPLAYNKDMQEDKEGMFDTVKTVIGSLKIFTGMIETMNVRVDAMEKATKQDFSNATELADYLAAKGMPFREAHEVVGKLVLHCIEQGVFLADLPLEVYKEASPLFEKDIYDALNPRTAVNRRNSAGGTGFAEVRATLAKVKERLGTL.

This sequence belongs to the lyase 1 family. Argininosuccinate lyase subfamily.

It localises to the cytoplasm. The enzyme catalyses 2-(N(omega)-L-arginino)succinate = fumarate + L-arginine. The protein operates within amino-acid biosynthesis; L-arginine biosynthesis; L-arginine from L-ornithine and carbamoyl phosphate: step 3/3. The protein is Argininosuccinate lyase of Geobacillus thermodenitrificans (strain NG80-2).